We begin with the raw amino-acid sequence, 192 residues long: NF-kappa-B inhibitor-interacting Ras-like protein 1 (192 aa).

11–18 (GLLSVGKT) serves as a coordination point for GTP. An Effector region motif is present at residues 35–43 (DCETMEDVY). Residues 58–93 (HLYDTRGLQEGVELPKHYFSFADGFVLVYSVNNLES) form an interactions with NFKBIA and NFKBIB region. Residues 61-65 (DTRGL) and 120-123 (NKID) each bind GTP. A disordered region spans residues 168–192 (LSQPQSKSSFPLPGRKNKGNSSSEN).

This sequence belongs to the small GTPase superfamily. Ras family. KappaB-Ras subfamily. As to quaternary structure, interacts with both NF-kappa-B inhibitor alpha (NFKBIA) and beta (NFKBIB) in vitro. However, it probably only interacts with NFKBIB in vivo. Forms a complex with NFKBIB and NF-kappa-B heterodimer (p50/NFKB1 and p65/RELA). Also interacts with c-Rel (REL).

It localises to the cytoplasm. Functionally, atypical Ras-like protein that acts as a potent regulator of NF-kappa-B activity by preventing the degradation of NF-kappa-B inhibitor beta (NFKBIB) by most signals, explaining why NFKBIB is more resistant to degradation. May act by blocking phosphorylation of NFKBIB and mediating cytoplasmic retention of p65/RELA NF-kappa-B subunit. It is unclear whether it acts as a GTPase. Both GTP- and GDP-bound forms block phosphorylation of NFKBIB. This is NF-kappa-B inhibitor-interacting Ras-like protein 1 (NKIRAS1) from Macaca fascicularis (Crab-eating macaque).